The primary structure comprises 278 residues: Nucleotide-binding protein Tmel_1373 (278 aa).

10–17 (GLSGAGKS) contributes to the ATP binding site. GTP is bound at residue 58–61 (DSRS).

It belongs to the RapZ-like family.

Functionally, displays ATPase and GTPase activities. This is Nucleotide-binding protein Tmel_1373 from Thermosipho melanesiensis (strain DSM 12029 / CIP 104789 / BI429).